We begin with the raw amino-acid sequence, 158 residues long: Small ribosomal subunit protein uS7 (158 aa).

This sequence belongs to the universal ribosomal protein uS7 family. Part of the 30S ribosomal subunit. Contacts proteins S9 and S11.

In terms of biological role, one of the primary rRNA binding proteins, it binds directly to 16S rRNA where it nucleates assembly of the head domain of the 30S subunit. Is located at the subunit interface close to the decoding center, probably blocks exit of the E-site tRNA. The chain is Small ribosomal subunit protein uS7 from Porphyromonas gingivalis (strain ATCC BAA-308 / W83).